A 273-amino-acid chain; its full sequence is Formamidopyrimidine-DNA glycosylase (273 aa).

P2 serves as the catalytic Schiff-base intermediate with DNA. The Proton donor role is filled by E3. Residue K57 is the Proton donor; for beta-elimination activity of the active site. H91, R110, and K151 together coordinate DNA. The segment at 236 to 270 (QVYGRKGEACNDCGTIIEAKVIGQRNSYFCPHCQI) adopts an FPG-type zinc-finger fold. Residue R260 is the Proton donor; for delta-elimination activity of the active site.

Belongs to the FPG family. As to quaternary structure, monomer. The cofactor is Zn(2+).

The enzyme catalyses Hydrolysis of DNA containing ring-opened 7-methylguanine residues, releasing 2,6-diamino-4-hydroxy-5-(N-methyl)formamidopyrimidine.. It carries out the reaction 2'-deoxyribonucleotide-(2'-deoxyribose 5'-phosphate)-2'-deoxyribonucleotide-DNA = a 3'-end 2'-deoxyribonucleotide-(2,3-dehydro-2,3-deoxyribose 5'-phosphate)-DNA + a 5'-end 5'-phospho-2'-deoxyribonucleoside-DNA + H(+). In terms of biological role, involved in base excision repair of DNA damaged by oxidation or by mutagenic agents. Acts as a DNA glycosylase that recognizes and removes damaged bases. Has a preference for oxidized purines, such as 7,8-dihydro-8-oxoguanine (8-oxoG). Has AP (apurinic/apyrimidinic) lyase activity and introduces nicks in the DNA strand. Cleaves the DNA backbone by beta-delta elimination to generate a single-strand break at the site of the removed base with both 3'- and 5'-phosphates. The chain is Formamidopyrimidine-DNA glycosylase from Actinobacillus pleuropneumoniae serotype 7 (strain AP76).